A 544-amino-acid polypeptide reads, in one-letter code: Chaperonin GroEL 1 (544 aa).

ATP contacts are provided by residues 29–32 (TLGP), 86–90 (DGTTT), G413, 482–484 (NVL), and D498.

The protein belongs to the chaperonin (HSP60) family. Forms a cylinder of 14 subunits composed of two heptameric rings stacked back-to-back. Interacts with the co-chaperonin GroES.

Its subcellular location is the cytoplasm. The catalysed reaction is ATP + H2O + a folded polypeptide = ADP + phosphate + an unfolded polypeptide.. Together with its co-chaperonin GroES, plays an essential role in assisting protein folding. The GroEL-GroES system forms a nano-cage that allows encapsulation of the non-native substrate proteins and provides a physical environment optimized to promote and accelerate protein folding. This Chloroflexus aurantiacus (strain ATCC 29366 / DSM 635 / J-10-fl) protein is Chaperonin GroEL 1.